Here is a 264-residue protein sequence, read N- to C-terminus: 3-dehydroquinate dehydratase (264 aa).

3-dehydroquinate contacts are provided by residues 50 to 52 (EWR) and R86. The Proton donor/acceptor role is filled by H148. K175 acts as the Schiff-base intermediate with substrate in catalysis. Residues R217, S236, and Q240 each coordinate 3-dehydroquinate.

It belongs to the type-I 3-dehydroquinase family. In terms of assembly, homodimer.

The catalysed reaction is 3-dehydroquinate = 3-dehydroshikimate + H2O. The protein operates within metabolic intermediate biosynthesis; chorismate biosynthesis; chorismate from D-erythrose 4-phosphate and phosphoenolpyruvate: step 3/7. Functionally, involved in the third step of the chorismate pathway, which leads to the biosynthesis of aromatic amino acids. Catalyzes the cis-dehydration of 3-dehydroquinate (DHQ) and introduces the first double bond of the aromatic ring to yield 3-dehydroshikimate. The protein is 3-dehydroquinate dehydratase of Albidiferax ferrireducens (strain ATCC BAA-621 / DSM 15236 / T118) (Rhodoferax ferrireducens).